The primary structure comprises 282 residues: Putative 4-diphosphocytidyl-2-C-methyl-D-erythritol kinase (282 aa).

Residue Lys9 is part of the active site. 93-103 contacts ATP; the sequence is PVSAGLAGGSA. Asp135 is an active-site residue.

It belongs to the GHMP kinase family. IspE subfamily.

The catalysed reaction is 4-CDP-2-C-methyl-D-erythritol + ATP = 4-CDP-2-C-methyl-D-erythritol 2-phosphate + ADP + H(+). Catalyzes the phosphorylation of the position 2 hydroxy group of 4-diphosphocytidyl-2C-methyl-D-erythritol. The sequence is that of Putative 4-diphosphocytidyl-2-C-methyl-D-erythritol kinase from Staphylococcus aureus (strain bovine RF122 / ET3-1).